The primary structure comprises 452 residues: Probable carboxypeptidase ACLA_088580 (452 aa).

An N-terminal signal peptide occupies residues 1 to 18 (MRSLTLLLSLSTALRSVA). 2 N-linked (GlcNAc...) asparagine glycosylation sites follow: Asn107 and Asn156. Residue Asp175 coordinates Zn(2+). Catalysis depends on Glu207, which acts as the Proton acceptor. Zn(2+) is bound at residue Glu208.

This sequence belongs to the peptidase M20A family. Requires Zn(2+) as cofactor.

It localises to the secreted. The sequence is that of Probable carboxypeptidase ACLA_088580 from Aspergillus clavatus (strain ATCC 1007 / CBS 513.65 / DSM 816 / NCTC 3887 / NRRL 1 / QM 1276 / 107).